The sequence spans 276 residues: NH(3)-dependent NAD(+) synthetase (276 aa).

Gly43–Ser50 is a binding site for ATP. Position 49 (Asp49) interacts with Mg(2+). Arg146 contributes to the deamido-NAD(+) binding site. An ATP-binding site is contributed by Thr166. Glu171 contacts Mg(2+). Deamido-NAD(+) contacts are provided by Lys179 and Asp186. Positions 195 and 217 each coordinate ATP. Position 266–267 (His266–Lys267) interacts with deamido-NAD(+).

This sequence belongs to the NAD synthetase family. Homodimer.

It catalyses the reaction deamido-NAD(+) + NH4(+) + ATP = AMP + diphosphate + NAD(+) + H(+). The protein operates within cofactor biosynthesis; NAD(+) biosynthesis; NAD(+) from deamido-NAD(+) (ammonia route): step 1/1. Its function is as follows. Catalyzes the ATP-dependent amidation of deamido-NAD to form NAD. Uses ammonia as a nitrogen source. The sequence is that of NH(3)-dependent NAD(+) synthetase from Shewanella baltica (strain OS223).